We begin with the raw amino-acid sequence, 496 residues long: Maturase K (496 aa).

It belongs to the intron maturase 2 family. MatK subfamily.

Its subcellular location is the plastid. The protein resides in the chloroplast. Functionally, usually encoded in the trnK tRNA gene intron. Probably assists in splicing its own and other chloroplast group II introns. The sequence is that of Maturase K from Paeonia cambessedesii (Majorcan peony).